The following is a 304-amino-acid chain: Voltage-dependent anion channel-forming protein YneE (304 aa).

Helical transmembrane passes span 28–48, 50–70, 194–214, and 220–240; these read LLLN…YTHL, IKFT…FLGF, VLAG…TLIL, and LFCI…TPFI.

This sequence belongs to the anion channel-forming bestrophin (TC 1.A.46) family.

It is found in the cell membrane. This is Voltage-dependent anion channel-forming protein YneE (yneE) from Escherichia coli (strain K12).